Reading from the N-terminus, the 403-residue chain is Prostaglandin D2 receptor 2 (403 aa).

Over Met-1–Ser-34 the chain is Extracellular. N-linked (GlcNAc...) asparagine glycans are attached at residues Asn-3, Asn-21, and Asn-24. A helical membrane pass occupies residues Val-35–Val-55. The Cytoplasmic portion of the chain corresponds to Val-56–His-71. Residues Leu-72–Val-92 form a helical membrane-spanning segment. At Gly-93 to Lys-104 the chain is on the extracellular side. Cys-103 and Cys-198 form a disulfide bridge. A helical transmembrane segment spans residues Leu-105 to Ser-125. Residues Leu-126–Ala-147 lie on the Cytoplasmic side of the membrane. Residues His-148–Phe-168 traverse the membrane as a helical segment. Topologically, residues Arg-169–Lys-209 are extracellular. The chain crosses the membrane as a helical span at residues Phe-210–Leu-230. Residues Gln-231–Arg-245 lie on the Cytoplasmic side of the membrane. A helical membrane pass occupies residues Leu-246–Leu-266. Topologically, residues Leu-267–Gly-284 are extracellular. A helical transmembrane segment spans residues Leu-285–Leu-305. The Cytoplasmic segment spans residues Thr-306–Asp-403. The Involved in the recycling of CRTH2 motif lies at Asp-329–Leu-332. Ser-330 carries the phosphoserine modification. Disordered regions lie at residues Leu-332–Thr-353 and Pro-384–Asp-403. Positions Lys-338–Ala-348 are enriched in basic residues. Ser-349 is subject to Phosphoserine. Polar residues predominate over residues Glu-393 to Asp-403.

This sequence belongs to the G-protein coupled receptor 1 family. In terms of processing, phosphorylated.

It is found in the cell membrane. Functionally, receptor for prostaglandin D2 (PGD2). Coupled to the G(i)-protein. Receptor activation may result in pertussis toxin-sensitive decreases in cAMP levels and Ca(2+) mobilization. PI3K signaling is also implicated in mediating PTGDR2 effects. PGD2 induced receptor internalization. CRTH2 internalization can be regulated by diverse kinases such as, PKC, PKA, GRK2, GPRK5/GRK5 and GRK6. Receptor activation is responsible, at least in part, in immune regulation and allergic/inflammation responses. The sequence is that of Prostaglandin D2 receptor 2 (Ptgdr2) from Rattus norvegicus (Rat).